Here is a 99-residue protein sequence, read N- to C-terminus: Class II hydrophobin 2 (99 aa).

The signal sequence occupies residues 1–15 (MKFFVVAALFAGALA). 2 disulfide bridges follow: Cys-30–Cys-79 and Cys-40–Cys-70.

This sequence belongs to the cerato-ulmin hydrophobin family. Homotetramer. Further self-assembles to form highly ordered films at water-air interfaces through intermolecular interactions.

Its subcellular location is the secreted. It localises to the cell wall. Aerial growth, conidiation, and dispersal of filamentous fungi in the environment rely upon a capability of their secreting small amphipathic proteins called hydrophobins (HPBs) with low sequence identity. Class I can self-assemble into an outermost layer of rodlet bundles on aerial cell surfaces, conferring cellular hydrophobicity that supports fungal growth, development and dispersal; whereas Class II form highly ordered films at water-air interfaces through intermolecular interactions but contribute nothing to the rodlet structure. HYD2 is a class II hydrophobin that contributes to the fruiting body development. The protein is Class II hydrophobin 2 of Cordyceps militaris (Caterpillar fungus).